The chain runs to 507 residues: uncharacterized protein (507 aa).

Residues 1 to 12 (MEKSISSISKAS) show a composition bias toward low complexity. Positions 1–20 (MEKSISSISKASMNSDEKLD) are disordered. Helical transmembrane passes span 57-74 (FDFR…FNAL), 100-120 (IMIS…SYLY), 126-146 (ARIL…QAAV), 157-177 (WFLG…LTTF), 189-209 (IFYA…YGVF), 221-241 (YLFL…FLVL), 283-303 (VFKH…GVPL), 326-346 (LMTV…AFIS), 353-373 (GIVL…YGSI), 379-399 (IGVS…SSVL), 416-436 (VFTS…ANIF), and 445-465 (VPAL…VASI).

It belongs to the major facilitator superfamily. Allantoate permease family.

The protein resides in the endoplasmic reticulum. It localises to the membrane. This is an uncharacterized protein from Schizosaccharomyces pombe (strain 972 / ATCC 24843) (Fission yeast).